The following is a 356-amino-acid chain: OVARIAN TUMOR DOMAIN-containing deubiquitinating enzyme 10 (356 aa).

The tract at residues 86–117 (DYSHQNQQQQHQQEGYTNNYSNNNNGYAWNDQ) is disordered. Residues 89-115 (HQNQQQQHQQEGYTNNYSNNNNGYAWN) show a composition bias toward low complexity. Residues 213–337 (FTEVKVPGDG…EVHYNAIYLN (125 aa)) enclose the OTU domain. The active site involves Asp-221. The active-site Nucleophile is the Cys-224. His-330 is a catalytic residue.

Belongs to the peptidase C85 family.

The enzyme catalyses Thiol-dependent hydrolysis of ester, thioester, amide, peptide and isopeptide bonds formed by the C-terminal Gly of ubiquitin (a 76-residue protein attached to proteins as an intracellular targeting signal).. In terms of biological role, hydrolase that can remove conjugated ubiquitin from proteins in vitro and may therefore play an important regulatory role at the level of protein turnover by preventing degradation. Cysteine protease with a preference for 'Lys-63' over 'Lys-48' over 'Met-1' -linked ubiquitin (UB) tetramers as substrates. Also cleaves RUB-GST fusion. In Arabidopsis thaliana (Mouse-ear cress), this protein is OVARIAN TUMOR DOMAIN-containing deubiquitinating enzyme 10.